The sequence spans 245 residues: 1-(5-phosphoribosyl)-5-[(5-phosphoribosylamino)methylideneamino] imidazole-4-carboxamide isomerase (245 aa).

Asp-7 acts as the Proton acceptor in catalysis. The Proton donor role is filled by Asp-129.

The protein belongs to the HisA/HisF family.

It is found in the cytoplasm. It carries out the reaction 1-(5-phospho-beta-D-ribosyl)-5-[(5-phospho-beta-D-ribosylamino)methylideneamino]imidazole-4-carboxamide = 5-[(5-phospho-1-deoxy-D-ribulos-1-ylimino)methylamino]-1-(5-phospho-beta-D-ribosyl)imidazole-4-carboxamide. It participates in amino-acid biosynthesis; L-histidine biosynthesis; L-histidine from 5-phospho-alpha-D-ribose 1-diphosphate: step 4/9. The chain is 1-(5-phosphoribosyl)-5-[(5-phosphoribosylamino)methylideneamino] imidazole-4-carboxamide isomerase from Shigella flexneri serotype 5b (strain 8401).